The following is a 160-amino-acid chain: 2-C-methyl-D-erythritol 2,4-cyclodiphosphate synthase (160 aa).

Residues Asp11 and His13 each coordinate a divalent metal cation. Residues 11 to 13 and 37 to 38 each bind 4-CDP-2-C-methyl-D-erythritol 2-phosphate; these read DVH and HS. His45 lines the a divalent metal cation pocket. Residues 59–61 and Arg145 each bind 4-CDP-2-C-methyl-D-erythritol 2-phosphate; that span reads DIG.

The protein belongs to the IspF family. In terms of assembly, homotrimer. The cofactor is a divalent metal cation.

It carries out the reaction 4-CDP-2-C-methyl-D-erythritol 2-phosphate = 2-C-methyl-D-erythritol 2,4-cyclic diphosphate + CMP. It participates in isoprenoid biosynthesis; isopentenyl diphosphate biosynthesis via DXP pathway; isopentenyl diphosphate from 1-deoxy-D-xylulose 5-phosphate: step 4/6. Functionally, involved in the biosynthesis of isopentenyl diphosphate (IPP) and dimethylallyl diphosphate (DMAPP), two major building blocks of isoprenoid compounds. Catalyzes the conversion of 4-diphosphocytidyl-2-C-methyl-D-erythritol 2-phosphate (CDP-ME2P) to 2-C-methyl-D-erythritol 2,4-cyclodiphosphate (ME-CPP) with a corresponding release of cytidine 5-monophosphate (CMP). In Neisseria gonorrhoeae (strain ATCC 700825 / FA 1090), this protein is 2-C-methyl-D-erythritol 2,4-cyclodiphosphate synthase.